A 152-amino-acid polypeptide reads, in one-letter code: MLP-like protein 165 (152 aa).

This sequence belongs to the MLP family.

This Arabidopsis thaliana (Mouse-ear cress) protein is MLP-like protein 165 (MLP165).